Consider the following 245-residue polypeptide: UDP-2,3-diacylglucosamine hydrolase (245 aa).

Mn(2+)-binding residues include Asp-8, His-10, Asp-41, Asn-79, and His-114. 79 to 80 (NR) serves as a coordination point for substrate. Substrate contacts are provided by Asp-122, Ser-160, Asn-164, Lys-167, and His-195. Mn(2+) is bound by residues His-195 and His-197.

It belongs to the LpxH family. Mn(2+) serves as cofactor.

It localises to the cell inner membrane. It catalyses the reaction UDP-2-N,3-O-bis[(3R)-3-hydroxytetradecanoyl]-alpha-D-glucosamine + H2O = 2-N,3-O-bis[(3R)-3-hydroxytetradecanoyl]-alpha-D-glucosaminyl 1-phosphate + UMP + 2 H(+). It participates in glycolipid biosynthesis; lipid IV(A) biosynthesis; lipid IV(A) from (3R)-3-hydroxytetradecanoyl-[acyl-carrier-protein] and UDP-N-acetyl-alpha-D-glucosamine: step 4/6. Hydrolyzes the pyrophosphate bond of UDP-2,3-diacylglucosamine to yield 2,3-diacylglucosamine 1-phosphate (lipid X) and UMP by catalyzing the attack of water at the alpha-P atom. Involved in the biosynthesis of lipid A, a phosphorylated glycolipid that anchors the lipopolysaccharide to the outer membrane of the cell. In Photobacterium profundum (strain SS9), this protein is UDP-2,3-diacylglucosamine hydrolase.